Here is a 1348-residue protein sequence, read N- to C-terminus: Phosphoribosylformylglycinamidine synthase (1348 aa).

ATP contacts are provided by residues 300-311 (GAATGAGGEIRD) and A701. Residues D702, E741, N745, and D941 each coordinate Mg(2+). S943 provides a ligand contact to ATP. The region spanning 1099–1348 (VAILREQGVN…MFRNARVWCG (250 aa)) is the Glutamine amidotransferase type-1 domain. The active-site Nucleophile is the C1192. Catalysis depends on residues H1313 and E1315.

In the N-terminal section; belongs to the FGAMS family. Monomer.

The protein localises to the cytoplasm. The enzyme catalyses N(2)-formyl-N(1)-(5-phospho-beta-D-ribosyl)glycinamide + L-glutamine + ATP + H2O = 2-formamido-N(1)-(5-O-phospho-beta-D-ribosyl)acetamidine + L-glutamate + ADP + phosphate + H(+). The protein operates within purine metabolism; IMP biosynthesis via de novo pathway; 5-amino-1-(5-phospho-D-ribosyl)imidazole from N(2)-formyl-N(1)-(5-phospho-D-ribosyl)glycinamide: step 1/2. Phosphoribosylformylglycinamidine synthase involved in the purines biosynthetic pathway. Catalyzes the ATP-dependent conversion of formylglycinamide ribonucleotide (FGAR) and glutamine to yield formylglycinamidine ribonucleotide (FGAM) and glutamate. This chain is Phosphoribosylformylglycinamidine synthase, found in Xanthomonas campestris pv. campestris (strain ATCC 33913 / DSM 3586 / NCPPB 528 / LMG 568 / P 25).